A 184-amino-acid polypeptide reads, in one-letter code: ATP-dependent protease subunit HslV (184 aa).

Thr12 is an active-site residue. Ala166, Cys169, and Thr172 together coordinate Na(+).

The protein belongs to the peptidase T1B family. HslV subfamily. As to quaternary structure, a double ring-shaped homohexamer of HslV is capped on each side by a ring-shaped HslU homohexamer. The assembly of the HslU/HslV complex is dependent on binding of ATP.

It localises to the cytoplasm. The enzyme catalyses ATP-dependent cleavage of peptide bonds with broad specificity.. With respect to regulation, allosterically activated by HslU binding. In terms of biological role, protease subunit of a proteasome-like degradation complex believed to be a general protein degrading machinery. In Brucella abortus (strain S19), this protein is ATP-dependent protease subunit HslV.